The following is a 1460-amino-acid chain: Collagen alpha-1(I) chain (1460 aa).

The N-terminal stretch at 1–22 (MFSFVDLRLLLLLAATALLTHG) is a signal peptide. A propeptide spans 23-157 (QEEGQEEDIP…PPGLGGNFAP (135 aa)) (N-terminal propeptide). One can recognise a VWFC domain in the interval 34-92 (VTCVQNGLRYYDRDVWKPEACRICVCDNGNVLCDDVICDETKNCPGAQVPPGECCPVCP). The interval 96–1213 (ASPTDQETTG…KAHDGGRYYR (1118 aa)) is disordered. Residues 134–149 (PGLPGPPGPPGPPGPP) are compositionally biased toward pro residues. Residues 158-174 (QMSYGYDEKSTGGISVP) form a nonhelical region (N-terminal) region. Lys-166 is subject to Allysine. Position 167 is a phosphoserine (Ser-167). The triple-helical region stretch occupies residues 175-1188 (GPMGPSGPRG…PGPPGPPGPP (1014 aa)). 4-hydroxyproline is present on residues Pro-186, Pro-189, Pro-192, Pro-201, Pro-204, Pro-207, Pro-222, Pro-237, Pro-243, Pro-252, and Pro-258. The span at 194-213 (PQGFQGPPGEPGEPGASGPM) shows a compositional bias: low complexity. A compositionally biased stretch (basic and acidic residues) spans 225–239 (NGDDGEAGKPGRPGE). Residue Lys-261 is modified to 5-hydroxylysine; alternate. Lys-261 carries an O-linked (Gal...) hydroxylysine; alternate glycan. Ser-267 carries the phosphoserine modification. The span at 275-291 (DAGPAGPKGEPGSPGEN) shows a compositional bias: low complexity. Pro-285, Pro-288, Pro-294, Pro-303, and Pro-309 each carry 4-hydroxyproline. The span at 314–327 (PAGARGNDGATGAA) shows a compositional bias: low complexity. Pro residues predominate over residues 329–341 (PPGPTGPAGPPGF). 4-hydroxyproline occurs at positions 330, 339, 342, 369, 372, 384, 390, 399, 405, 408, and 423. Residues 375–414 (AGAAGPAGNPGADGQPGAKGANGAPGIAGAPGFPGARGPS) are compositionally biased toward low complexity. Lys-426 is subject to 5-hydroxylysine. 8 positions are modified to 4-hydroxyproline: Pro-432, Pro-435, Pro-447, Pro-456, Pro-471, Pro-477, Pro-486, and Pro-492. Over residues 481–490 (GERGGPGSRG) the composition is skewed to gly residues. At Lys-501 the chain carries 5-hydroxylysine. 28 positions are modified to 4-hydroxyproline: Pro-510, Pro-519, Pro-525, Pro-531, Pro-540, Pro-543, Pro-552, Pro-561, Pro-567, Pro-579, Pro-588, Pro-597, Pro-600, Pro-618, Pro-636, Pro-642, Pro-648, Pro-654, Pro-660, Pro-666, Pro-678, Pro-687, Pro-699, Pro-711, Pro-714, Pro-720, Pro-726, and Pro-735. Positions 534–560 (KGLTGSPGSPGPDGKTGPPGPAGQDGR) are enriched in low complexity. Low complexity predominate over residues 569–588 (ARGQAGVMGFPGPKGAAGEP). Positions 630 to 657 (QGPAGSPGFQGLPGPAGPPGEAGKPGEQ) are enriched in low complexity. The span at 692 to 720 (PRGANGAPGNDGAKGDAGAPGAPGSQGAP) shows a compositional bias: low complexity. The short motif at 741–743 (RGD) is the Cell attachment site element. Lys-747 carries the 5-hydroxylysine modification. Residues Pro-753, Pro-768, and Pro-774 each carry the 4-hydroxyproline modification. Residues 780-794 (AGPSGPAGPTGARGA) show a composition bias toward low complexity. At Ser-783 the chain carries Phosphoserine. 8 positions are modified to 4-hydroxyproline: Pro-795, Pro-801, Pro-804, Pro-813, Pro-819, Pro-837, Pro-846, and Pro-855. Residues 807-834 (AGFAGPPGADGQPGAKGEPGDAGAKGDA) are compositionally biased toward low complexity. Pro residues predominate over residues 836–848 (PPGPAGPTGPPGP). Residue Lys-858 is modified to 5-hydroxylysine. The segment covering 863-879 (SAGPPGATGFPGAAGRV) has biased composition (low complexity). 2 positions are modified to 4-hydroxyproline: Pro-867 and Pro-873. A 3-hydroxyproline modification is found at Pro-881. Pro-882, Pro-891, Pro-894, Pro-915, Pro-924, Pro-933, Pro-942, Pro-960, Pro-969, Pro-972, Pro-978, Pro-993, Pro-999, Pro-1005, Pro-1014, and Pro-1020 each carry 4-hydroxyproline. Residues 908–917 (ETGPAGRPGE) are compositionally biased toward low complexity. Residues 927–951 (AGEKGSPGADGPAGAPGTPGPQGIA) show a composition bias toward low complexity. Over residues 992–1002 (PPGPMGPPGLA) the composition is skewed to pro residues. Low complexity predominate over residues 1004-1019 (PPGESGREGSPGAEGS). At Lys-1029 the chain carries 5-hydroxylysine. Residues 1038 to 1053 (AGPPGAPGAPGAPGPV) show a composition bias toward pro residues. Residues Pro-1041, Pro-1044, and Pro-1047 each carry the 4-hydroxyproline modification. The span at 1074–1088 (IGPVGARGPAGPQGP) shows a compositional bias: low complexity. The Cell attachment site signature appears at 1089–1091 (RGD). The segment covering 1089-1103 (RGDKGETGEQGDRGI) has biased composition (basic and acidic residues). A 5-hydroxylysine modification is found at Lys-1092. Lys-1104 carries the post-translational modification 5-hydroxylysine; alternate. An O-linked (Gal...) hydroxylysine; alternate glycan is attached at Lys-1104. 4-hydroxyproline occurs at positions 1116, 1119, 1122, 1140, and 1155. A compositionally biased stretch (low complexity) spans 1122–1155 (PGEQGPSGASGPAGPRGPPGSAGSPGKDGLNGLP). The residue at position 1160 (Pro-1160) is a 3-hydroxyproline. Pro-1161 carries the post-translational modification 4-hydroxyproline. A compositionally biased stretch (pro residues) spans 1173-1188 (VGPPGPPGPPGPPGPP). A 3-hydroxyproline modification is found at Pro-1175. Pro-1176 is modified (4-hydroxyproline). At Pro-1178 the chain carries 3-hydroxyproline. Pro-1179 bears the 4-hydroxyproline mark. 3-hydroxyproline is present on Pro-1181. A 4-hydroxyproline mark is found at Pro-1182, Pro-1185, and Pro-1188. Residues 1189–1214 (SGGFDFSFLPQPPQEKAHDGGRYYRA) form a nonhelical region (C-terminal) region. Residues 1203–1213 (EKAHDGGRYYR) show a composition bias toward basic and acidic residues. Lys-1204 is subject to Allysine. A propeptide spans 1215–1460 (DDANVVRDRD…GMDIGPVCFL (246 aa)) (C-terminal propeptide). In terms of domain architecture, Fibrillar collagen NC1 spans 1225 to 1460 (LEVDTTLKSL…GMDIGPVCFL (236 aa)). 3 disulfide bridges follow: Cys-1255–Cys-1287, Cys-1295–Cys-1458, and Cys-1366–Cys-1411. The Ca(2+) site is built by Asp-1273, Asn-1275, Gln-1276, Cys-1278, and Asp-1281. Asn-1361 is a glycosylation site (N-linked (GlcNAc...) asparagine).

The protein belongs to the fibrillar collagen family. As to quaternary structure, trimers of one alpha 2(I) and two alpha 1(I) chains. Interacts with MRC2. Interacts with TRAM2. Interacts with MFAP4 in a Ca (2+)-dependent manner. Contains mostly 4-hydroxyproline. Proline residues at the third position of the tripeptide repeating unit (G-X-Y) are hydroxylated in some or all of the chains. In terms of processing, contains 3-hydroxyproline at a few sites. This modification occurs on the first proline residue in the sequence motif Gly-Pro-Hyp, where Hyp is 4-hydroxyproline. Post-translationally, lysine residues at the third position of the tripeptide repeating unit (G-X-Y) are 5-hydroxylated in some or all of the chains. O-glycosylated on hydroxylated lysine residues. The O-linked glycan consists of a Glc-Gal disaccharide.

Its subcellular location is the secreted. The protein resides in the extracellular space. It is found in the extracellular matrix. Its function is as follows. Type I collagen is a member of group I collagen (fibrillar forming collagen). The protein is Collagen alpha-1(I) chain (COL1A1) of Canis lupus familiaris (Dog).